The sequence spans 438 residues: (S)-3,5-dihydroxyphenylglycine transaminase (438 aa).

N6-(pyridoxal phosphate)lysine is present on Lys-266.

This sequence belongs to the class-I pyridoxal-phosphate-dependent aminotransferase family. It depends on pyridoxal 5'-phosphate as a cofactor.

It catalyses the reaction (S)-3,5-dihydroxyphenylglycine + 2-oxoglutarate = 2-(3,5-dihydroxyphenyl)-2-oxoacetate + L-glutamate. It functions in the pathway antibiotic biosynthesis; vancomycin biosynthesis. Functionally, catalyzes the transamination of p-hydroxybenzoylformate to L-p-hydroxyphenylglycine as part of the biosynthesis of the (S)-3,5-dihydroxyphenylglycine constituent of the glycopeptide antibiotic chloroeremomycin, a member of the vancomycin group of antibiotics. The polypeptide is (S)-3,5-dihydroxyphenylglycine transaminase (hpgT) (Amycolatopsis orientalis (Nocardia orientalis)).